Reading from the N-terminus, the 536-residue chain is Glutamate--tRNA ligase, mitochondrial (536 aa).

48–50 (RFA) provides a ligand contact to L-glutamate. The short motif at 53-61 (PTGFLHLGS) is the 'HIGH' region element. An ATP-binding site is contributed by His58. L-glutamate contacts are provided by residues Glu84, 235-239 (YHLAN), and Arg253. ATP-binding positions include Glu256 and 291–295 (KLSKR). The short motif at 291–295 (KLSKR) is the 'KMSKS' region element.

This sequence belongs to the class-I aminoacyl-tRNA synthetase family. Glutamate--tRNA ligase type 1 subfamily.

Its subcellular location is the mitochondrion matrix. The catalysed reaction is tRNA(Glu) + L-glutamate + ATP = L-glutamyl-tRNA(Glu) + AMP + diphosphate. Its function is as follows. Catalyzes the attachment of glutamate to tRNA(Glu) in a two-step reaction: glutamate is first activated by ATP to form Glu-AMP and then transferred to the acceptor end of tRNA(Glu). This Saccharomyces cerevisiae (strain ATCC 204508 / S288c) (Baker's yeast) protein is Glutamate--tRNA ligase, mitochondrial (MSE1).